The primary structure comprises 67 residues: DNA-directed RNA polymerase subunit omega (67 aa).

It belongs to the RNA polymerase subunit omega family. In terms of assembly, the RNAP catalytic core consists of 2 alpha, 1 beta, 1 beta' and 1 omega subunit. When a sigma factor is associated with the core the holoenzyme is formed, which can initiate transcription.

It catalyses the reaction RNA(n) + a ribonucleoside 5'-triphosphate = RNA(n+1) + diphosphate. Functionally, promotes RNA polymerase assembly. Latches the N- and C-terminal regions of the beta' subunit thereby facilitating its interaction with the beta and alpha subunits. The chain is DNA-directed RNA polymerase subunit omega from Bacillus velezensis (strain DSM 23117 / BGSC 10A6 / LMG 26770 / FZB42) (Bacillus amyloliquefaciens subsp. plantarum).